The primary structure comprises 315 residues: Methionyl-tRNA formyltransferase (315 aa).

Residue 113 to 116 (SLLP) coordinates (6S)-5,6,7,8-tetrahydrofolate.

The protein belongs to the Fmt family.

The enzyme catalyses L-methionyl-tRNA(fMet) + (6R)-10-formyltetrahydrofolate = N-formyl-L-methionyl-tRNA(fMet) + (6S)-5,6,7,8-tetrahydrofolate + H(+). Functionally, attaches a formyl group to the free amino group of methionyl-tRNA(fMet). The formyl group appears to play a dual role in the initiator identity of N-formylmethionyl-tRNA by promoting its recognition by IF2 and preventing the misappropriation of this tRNA by the elongation apparatus. The chain is Methionyl-tRNA formyltransferase from Erwinia tasmaniensis (strain DSM 17950 / CFBP 7177 / CIP 109463 / NCPPB 4357 / Et1/99).